We begin with the raw amino-acid sequence, 267 residues long: Taurine import ATP-binding protein TauB (267 aa).

An ABC transporter domain is found at 6 to 238; the sequence is FNEASLIYPA…DILAGAPASE (233 aa). 43 to 50 contacts ATP; it reads GRSGSGKT.

It belongs to the ABC transporter superfamily. Taurine importer (TC 3.A.1.17.1) family. The complex is composed of two ATP-binding proteins (TauB), two transmembrane proteins (TauC) and a solute-binding protein (TauA).

Its subcellular location is the cell inner membrane. It catalyses the reaction taurine(out) + ATP + H2O = taurine(in) + ADP + phosphate + H(+). Part of the ABC transporter complex TauABC involved in taurine import. Responsible for energy coupling to the transport system. The chain is Taurine import ATP-binding protein TauB from Sinorhizobium fredii (strain NBRC 101917 / NGR234).